A 193-amino-acid polypeptide reads, in one-letter code: Potassium-transporting ATPase KdpC subunit (193 aa).

A helical transmembrane segment spans residues 7–27 (PLVVIFVVLTAVTGLAYPAVM).

Belongs to the KdpC family. In terms of assembly, the system is composed of three essential subunits: KdpA, KdpB and KdpC.

It localises to the cell inner membrane. In terms of biological role, part of the high-affinity ATP-driven potassium transport (or Kdp) system, which catalyzes the hydrolysis of ATP coupled with the electrogenic transport of potassium into the cytoplasm. This subunit acts as a catalytic chaperone that increases the ATP-binding affinity of the ATP-hydrolyzing subunit KdpB by the formation of a transient KdpB/KdpC/ATP ternary complex. This Burkholderia ambifaria (strain ATCC BAA-244 / DSM 16087 / CCUG 44356 / LMG 19182 / AMMD) (Burkholderia cepacia (strain AMMD)) protein is Potassium-transporting ATPase KdpC subunit.